The primary structure comprises 276 residues: NAD kinase (276 aa).

Asp61 acts as the Proton acceptor in catalysis. NAD(+)-binding positions include 61 to 62 (DG), Arg66, 135 to 136 (NE), Arg146, His163, Asp165, and Ala200.

This sequence belongs to the NAD kinase family. Requires a divalent metal cation as cofactor.

It is found in the cytoplasm. The catalysed reaction is NAD(+) + ATP = ADP + NADP(+) + H(+). Functionally, involved in the regulation of the intracellular balance of NAD and NADP, and is a key enzyme in the biosynthesis of NADP. Catalyzes specifically the phosphorylation on 2'-hydroxyl of the adenosine moiety of NAD to yield NADP. The protein is NAD kinase of Chloroflexus aurantiacus (strain ATCC 29366 / DSM 635 / J-10-fl).